Here is a 244-residue protein sequence, read N- to C-terminus: Cytochrome c1 (244 aa).

The signal sequence occupies residues 1-19; sequence MRKLILATFLLLAPTALLA. Heme c is bound by residues Cys50, Cys53, and His54. A helical membrane pass occupies residues 220–240; the sequence is YVLLFLGFLFILAYLLKKEYW.

As to quaternary structure, the main subunits of complex b-c1 are: cytochrome b, cytochrome c1 and the Rieske protein. Post-translationally, binds 1 heme c group covalently per subunit.

Its subcellular location is the cell membrane. Functionally, component of the ubiquinol-cytochrome c reductase complex (complex III or cytochrome b-c1 complex), which is a respiratory chain that generates an electrochemical potential coupled to ATP synthesis. c1 functions as an electron donor to cytochrome c. The protein is Cytochrome c1 (petC) of Allochromatium vinosum (strain ATCC 17899 / DSM 180 / NBRC 103801 / NCIMB 10441 / D) (Chromatium vinosum).